The chain runs to 202 residues: Adenosylcobalamin/alpha-ribazole phosphatase (202 aa).

The Tele-phosphohistidine intermediate role is filled by H8. E81 serves as the catalytic Proton donor/acceptor.

The protein belongs to the phosphoglycerate mutase family. In terms of assembly, monomer.

It carries out the reaction adenosylcob(III)alamin 5'-phosphate + H2O = adenosylcob(III)alamin + phosphate. It catalyses the reaction alpha-ribazole 5'-phosphate + H2O = alpha-ribazole + phosphate. It functions in the pathway nucleoside biosynthesis; alpha-ribazole biosynthesis; alpha-ribazole from 5,6-dimethylbenzimidazole: step 2/2. In terms of biological role, catalyzes the conversion of adenosylcobalamin 5'-phosphate to adenosylcobalamin (vitamin B12); involved in the assembly of the nucleotide loop of cobalamin. Also catalyzes the hydrolysis of the phospho group from alpha-ribazole 5'-phosphate to form alpha-ribazole. The protein is Adenosylcobalamin/alpha-ribazole phosphatase (cobC) of Salmonella typhimurium (strain LT2 / SGSC1412 / ATCC 700720).